A 102-amino-acid polypeptide reads, in one-letter code: MANKKIRIRLKAYKHRTLDTAAAKIVESATRTGAQVAGPIPLPTERSLYTIIRATHKYKDSREQFEMRTHKRLIDIVNPTQKTVDALMKLDLPSGVNVEIKL.

Belongs to the universal ribosomal protein uS10 family. Part of the 30S ribosomal subunit.

Its function is as follows. Involved in the binding of tRNA to the ribosomes. The polypeptide is Small ribosomal subunit protein uS10 (Streptococcus pneumoniae (strain Taiwan19F-14)).